The following is a 1505-amino-acid chain: ABC transporter C family member 13 (1505 aa).

12 helical membrane passes run 11–31 (EAAA…LLLL), 54–68 (AVDG…VGAW), 71–91 (AALA…SYEV), 102–122 (ALLL…LAMQ), 131–151 (FPVL…GIAY), 171–191 (MVAN…GVMG), 313–333 (AFAA…SYFV), 336–356 (LSGK…FFVA), 367–387 (WYLG…AMVY), 421–441 (AWYF…LAIL), 447–467 (IAMV…VPVA), and 534–554 (FVFW…CILL). The ABC transmembrane type-1 1 domain occupies 314–589 (FAAVNTIVSY…FPDLISMIAQ (276 aa)). Residues 623–846 (ININDATFSW…GTDFNALVCA (224 aa)) enclose the ABC transporter 1 domain. 658–665 (GVIGSGKS) is a binding site for ATP. The span at 881–897 (DNLKNKVSNNEKPSSTR) shows a compositional bias: polar residues. The interval 881–919 (DNLKNKVSNNEKPSSTRGIKEKKKKPEERKKKRSVQEEE) is disordered. A compositionally biased stretch (basic and acidic residues) spans 904–919 (KKPEERKKKRSVQEEE). Transmembrane regions (helical) follow at residues 940 to 960 (GTLI…QIAS), 980 to 1000 (SVVL…FVFV), 1055 to 1077 (IAFR…AVMS), 1081 to 1103 (WQVL…YYIA), 1149 to 1169 (LLDC…WLCL), and 1174 to 1194 (LSTF…PGTI). Residues 945–1215 (LIILAQTMFQ…GLNLNARMSR (271 aa)) enclose the ABC transmembrane type-1 2 domain. Residues 1262–1496 (IELVDLKVRY…KSSMFMQLVS (235 aa)) form the ABC transporter 2 domain. 1296 to 1303 (GRTGSGKS) serves as a coordination point for ATP.

This sequence belongs to the ABC transporter superfamily. ABCC family. Conjugate transporter (TC 3.A.1.208) subfamily.

It is found in the membrane. ABC transporter that may affect phytic acid transport and compartmentalization. May function directly or indirectly in removing phytic acid from the cytosol or in vesicle trafficking. Required for phytic acid accumulation in developing seeds. Phytic acid is the primary storage form of phosphorus in cereal grains and other plant seeds. The polypeptide is ABC transporter C family member 13 (Oryza sativa subsp. indica (Rice)).